A 203-amino-acid polypeptide reads, in one-letter code: ATP-dependent Clp protease proteolytic subunit (203 aa).

Serine 107 functions as the Nucleophile in the catalytic mechanism. Histidine 132 is an active-site residue.

It belongs to the peptidase S14 family. As to quaternary structure, fourteen ClpP subunits assemble into 2 heptameric rings which stack back to back to give a disk-like structure with a central cavity, resembling the structure of eukaryotic proteasomes.

The protein resides in the cytoplasm. The catalysed reaction is Hydrolysis of proteins to small peptides in the presence of ATP and magnesium. alpha-casein is the usual test substrate. In the absence of ATP, only oligopeptides shorter than five residues are hydrolyzed (such as succinyl-Leu-Tyr-|-NHMec, and Leu-Tyr-Leu-|-Tyr-Trp, in which cleavage of the -Tyr-|-Leu- and -Tyr-|-Trp bonds also occurs).. Its function is as follows. Cleaves peptides in various proteins in a process that requires ATP hydrolysis. Has a chymotrypsin-like activity. Plays a major role in the degradation of misfolded proteins. This Pelagibacter ubique (strain HTCC1062) protein is ATP-dependent Clp protease proteolytic subunit.